Here is a 448-residue protein sequence, read N- to C-terminus: Beta-glucosidase B (448 aa).

Residue glutamate 167 is the Proton donor of the active site. Glutamate 356 serves as the catalytic Nucleophile.

It belongs to the glycosyl hydrolase 1 family.

It catalyses the reaction Hydrolysis of terminal, non-reducing beta-D-glucosyl residues with release of beta-D-glucose.. This chain is Beta-glucosidase B (bglB), found in Paenibacillus polymyxa (Bacillus polymyxa).